A 274-amino-acid chain; its full sequence is MAFSGHHARKRFGQHWLKDESVLQRIVAAAALQPDDHVLEVGPGRGALTAQLLASPAASVQAVELDRDLVAGLQQRFAAEPRFQLQSGDVLALPQLGDGERRPTKVVANIPYNITGPLLERLVGRLDRPVEPPYQRLVLLVQQEVARRISARAGQSSFSALSVRMQLLAHCRSVCPVPPRCFQPPPKVQSEVISLDPLPADQRPPQAVAKQVEHLLRLAFSARRKMVRNTLASAAPAVGLEVWLADAGLTPQQRPQEIAAQQWVALAAALQPAL.

S-adenosyl-L-methionine contacts are provided by H15, L17, G42, E64, D89, and N109.

This sequence belongs to the class I-like SAM-binding methyltransferase superfamily. rRNA adenine N(6)-methyltransferase family. RsmA subfamily.

The protein localises to the cytoplasm. The enzyme catalyses adenosine(1518)/adenosine(1519) in 16S rRNA + 4 S-adenosyl-L-methionine = N(6)-dimethyladenosine(1518)/N(6)-dimethyladenosine(1519) in 16S rRNA + 4 S-adenosyl-L-homocysteine + 4 H(+). In terms of biological role, specifically dimethylates two adjacent adenosines (A1518 and A1519) in the loop of a conserved hairpin near the 3'-end of 16S rRNA in the 30S particle. May play a critical role in biogenesis of 30S subunits. The polypeptide is Ribosomal RNA small subunit methyltransferase A (Synechococcus sp. (strain RCC307)).